The sequence spans 468 residues: ERO1-like protein alpha (468 aa).

The signal sequence occupies residues 1 to 23 (MGRRWGFLIGFLVAVGLLGLGHG). 8 disulfides stabilise this stretch: C35–C48, C37–C46, C85–C391, C94–C99, C94–C131, C99–C104, C208–C241, and C394–C397. A phosphoserine mark is found at S106, S143, and S145. FAD-binding residues include R187, T189, and W200. 2 residues coordinate FAD: S252 and H255. N280 carries an N-linked (GlcNAc...) asparagine glycan. Residues R287 and R300 each coordinate FAD. The N-linked (GlcNAc...) asparagine glycan is linked to N384.

This sequence belongs to the EROs family. Predominantly monomer. May function both as a monomer and a homodimer. Interacts with PDILT. Interacts with ERP44; the interaction results in retention of ERO1A in the endoplasmic reticulum. Requires FAD as cofactor. Post-translationally, the Cys-94/Cys-99 and Cys-394/Cys-397 disulfide bonds constitute the redox-active center. The Cys-94/Cys-99 disulfide bond may accept electron from P4HB and funnel them to the active site disulfide Cys-394/Cys-397. The regulatory Cys-99/Cys-104 disulfide bond stabilizes the other regulatory bond Cys-94/Cys-131. In terms of processing, phosphorylated on Ser-145 by FAM20C in the Golgi which increases its enzymatic activity. Phosphorylation is induced by lactation. It is also induced by hypoxia and reductive stress.

Its subcellular location is the endoplasmic reticulum membrane. It localises to the golgi apparatus lumen. The protein localises to the secreted. It is found in the cell projection. The protein resides in the dendrite. With respect to regulation, enzyme activity is tightly regulated to prevent the accumulation of reactive oxygen species in the endoplasmic reticulum. Reversibly down-regulated by the formation of disulfide bonds between the active site Cys-94 and Cys-131, and between Cys-99 and Cys-104. Glutathione may be required to regulate its activity in the endoplasmic reticulum. Its function is as follows. Oxidoreductase involved in disulfide bond formation in the endoplasmic reticulum. Efficiently reoxidizes P4HB/PDI, the enzyme catalyzing protein disulfide formation, in order to allow P4HB to sustain additional rounds of disulfide formation. Following P4HB reoxidation, passes its electrons to molecular oxygen via FAD, leading to the production of reactive oxygen species (ROS) in the cell. Required for the proper folding of immunoglobulins. Plays an important role in ER stress-induced, CHOP-dependent apoptosis by activating the inositol 1,4,5-trisphosphate receptor IP3R1. The protein is ERO1-like protein alpha of Bos taurus (Bovine).